Consider the following 135-residue polypeptide: UPF0102 protein RPC_0320 (135 aa).

This sequence belongs to the UPF0102 family.

This Rhodopseudomonas palustris (strain BisB18) protein is UPF0102 protein RPC_0320.